The primary structure comprises 844 residues: Neuronal PAS domain-containing protein 4B (844 aa).

The interval 61–74 is basic motif; degenerate; the sequence is KMYRSTKGASKARR. A bHLH domain is found at 61 to 114; the sequence is KMYRSTKGASKARRDQINAEIRSLKELLPISDADKARLSYLHIMSLACIYTRKS. The tract at residues 75 to 114 is helix-loop-helix motif; that stretch reads DQINAEIRSLKELLPISDADKARLSYLHIMSLACIYTRKS. 2 consecutive PAS domains span residues 132–190 and 294–343; these read SLPE…PVDH and DMRI…LHNG. The segment covering 410-422 has biased composition (polar residues); it reads SRQSSDPLSSPDQ. Disordered stretches follow at residues 410 to 432, 444 to 479, 702 to 725, and 757 to 784; these read SRQS…SGLS, GRSS…GGGH, PLPN…SYSQ, and TEGG…EAPA. Residues 704-716 are compositionally biased toward pro residues; that stretch reads PNLPSPSPVPPSP.

In terms of assembly, efficient DNA binding requires dimerization with another bHLH protein.

It localises to the nucleus. In terms of biological role, transcription factor expressed in neurons of the brain that regulates the excitatory-inhibitory balance within neural circuits and is required for contextual memory in the hippocampus. Plays a key role in the structural and functional plasticity of neurons. Acts as an early-response transcription factor in both excitatory and inhibitory neurons, where it induces distinct but overlapping sets of late-response genes in these two types of neurons, allowing the synapses that form on inhibitory and excitatory neurons to be modified by neuronal activity in a manner specific to their function within a circuit, thereby facilitating appropriate circuit responses to sensory experience. The sequence is that of Neuronal PAS domain-containing protein 4B (npas4b) from Danio rerio (Zebrafish).